The chain runs to 227 residues: Cytidylate kinase (227 aa).

12-20 (GPSGSGKGT) contributes to the ATP binding site.

This sequence belongs to the cytidylate kinase family. Type 1 subfamily.

The protein resides in the cytoplasm. It catalyses the reaction CMP + ATP = CDP + ADP. The enzyme catalyses dCMP + ATP = dCDP + ADP. This Nitrosococcus oceani (strain ATCC 19707 / BCRC 17464 / JCM 30415 / NCIMB 11848 / C-107) protein is Cytidylate kinase.